Here is a 209-residue protein sequence, read N- to C-terminus: Thymidine kinase (209 aa).

Residues 16-23 and 90-93 contribute to the ATP site; these read GPMFAGKT and DESQ. Glutamate 91 (proton acceptor) is an active-site residue.

This sequence belongs to the thymidine kinase family. As to quaternary structure, homotetramer.

It is found in the cytoplasm. The enzyme catalyses thymidine + ATP = dTMP + ADP + H(+). The sequence is that of Thymidine kinase from Aster yellows witches'-broom phytoplasma (strain AYWB).